The following is a 343-amino-acid chain: Aspartate carbamoyltransferase catalytic subunit (343 aa).

Residues Arg-91 and Thr-92 each contribute to the carbamoyl phosphate site. Lys-119 is a binding site for L-aspartate. The carbamoyl phosphate site is built by Arg-141, His-171, and Gln-174. Arg-204 and Arg-259 together coordinate L-aspartate. Residues Gly-300 and Pro-301 each coordinate carbamoyl phosphate.

The protein belongs to the aspartate/ornithine carbamoyltransferase superfamily. ATCase family. Heterododecamer (2C3:3R2) of six catalytic PyrB chains organized as two trimers (C3), and six regulatory PyrI chains organized as three dimers (R2).

It carries out the reaction carbamoyl phosphate + L-aspartate = N-carbamoyl-L-aspartate + phosphate + H(+). The protein operates within pyrimidine metabolism; UMP biosynthesis via de novo pathway; (S)-dihydroorotate from bicarbonate: step 2/3. Its function is as follows. Catalyzes the condensation of carbamoyl phosphate and aspartate to form carbamoyl aspartate and inorganic phosphate, the committed step in the de novo pyrimidine nucleotide biosynthesis pathway. The polypeptide is Aspartate carbamoyltransferase catalytic subunit (Burkholderia vietnamiensis (strain G4 / LMG 22486) (Burkholderia cepacia (strain R1808))).